A 2628-amino-acid chain; its full sequence is Hemagglutinin A (2628 aa).

Positions 1–24 (MRKLNSLFSLAVLLSLLCWGQTAA) are cleaved as a signal peptide. Peptidase C25-like stretches follow at residues 25–539 (AQGG…TPPP), 540–995 (GGTS…TPPP), 996–1451 (GGTS…TPPP), 1452–1907 (GGTS…TPPP), and 2074–2628 (IDAD…LAVK). Disordered regions lie at residues 493–512 (WDAP…LSES), 520–546 (SWKT…SFAG), 944–1002 (KWDA…SFAG), 1400–1458 (KWDA…SFAG), 1856–1881 (KWDA…SESF), 1890–1909 (KTID…PPGG), and 2336–2358 (SSWK…PPGG). A compositionally biased stretch (low complexity) spans 496–508 (PNGTPNPNPGTTT).

It belongs to the peptidase C25 family.

Functionally, agglutinates erythrocytes. This is Hemagglutinin A (hagA) from Porphyromonas gingivalis (Bacteroides gingivalis).